The following is a 99-amino-acid chain: Large ribosomal subunit protein uL23 (99 aa).

Belongs to the universal ribosomal protein uL23 family. As to quaternary structure, part of the 50S ribosomal subunit. Contacts protein L29, and trigger factor when it is bound to the ribosome.

Functionally, one of the early assembly proteins it binds 23S rRNA. One of the proteins that surrounds the polypeptide exit tunnel on the outside of the ribosome. Forms the main docking site for trigger factor binding to the ribosome. The sequence is that of Large ribosomal subunit protein uL23 from Hyphomonas neptunium (strain ATCC 15444).